A 363-amino-acid polypeptide reads, in one-letter code: UDP-N-acetylglucosamine--N-acetylmuramyl-(pentapeptide) pyrophosphoryl-undecaprenol N-acetylglucosamine transferase (363 aa).

Residues 10–12, asparagine 124, serine 195, isoleucine 250, and glutamine 295 each bind UDP-N-acetyl-alpha-D-glucosamine; that span reads TGG.

The protein belongs to the glycosyltransferase 28 family. MurG subfamily.

The protein localises to the cell membrane. It carries out the reaction di-trans,octa-cis-undecaprenyl diphospho-N-acetyl-alpha-D-muramoyl-L-alanyl-D-glutamyl-meso-2,6-diaminopimeloyl-D-alanyl-D-alanine + UDP-N-acetyl-alpha-D-glucosamine = di-trans,octa-cis-undecaprenyl diphospho-[N-acetyl-alpha-D-glucosaminyl-(1-&gt;4)]-N-acetyl-alpha-D-muramoyl-L-alanyl-D-glutamyl-meso-2,6-diaminopimeloyl-D-alanyl-D-alanine + UDP + H(+). It functions in the pathway cell wall biogenesis; peptidoglycan biosynthesis. Functionally, cell wall formation. Catalyzes the transfer of a GlcNAc subunit on undecaprenyl-pyrophosphoryl-MurNAc-pentapeptide (lipid intermediate I) to form undecaprenyl-pyrophosphoryl-MurNAc-(pentapeptide)GlcNAc (lipid intermediate II). The protein is UDP-N-acetylglucosamine--N-acetylmuramyl-(pentapeptide) pyrophosphoryl-undecaprenol N-acetylglucosamine transferase of Listeria monocytogenes serotype 4b (strain CLIP80459).